The following is a 145-amino-acid chain: Protein BUD31 homolog 1 (145 aa).

Belongs to the BUD31 (G10) family.

The protein localises to the nucleus. In Oryza sativa subsp. japonica (Rice), this protein is Protein BUD31 homolog 1.